A 372-amino-acid chain; its full sequence is Meiotic drive suppressor wtf18 (372 aa).

6 helical membrane-spanning segments follow: residues 86 to 106 (FLLRLLISVLAVSVVFFTAWV), 120 to 140 (AFSVTIGITCPILFIATFCFF), 153 to 173 (VTVIFLAQCVKVTVIFLAQCV), 197 to 217 (DLVVTIWLAWVVICFILFGCV), 233 to 253 (CSISAALFFILLLVCIPIWTL), and 257 to 277 (LFGLFQVLGVQSCVVIVTKGL).

The protein belongs to the WTF family. As to quaternary structure, homomer. Interacts with other proteins that exhibit high sequence similarity.

It is found in the spore membrane. Its subcellular location is the vacuole membrane. Functionally, acts as a suppressor component of the dual wtf meiotic drive system, and can suppress but not confer meiotic drive by compatible poisons. Wtf meiotic drive systems promote unequal transmission of alleles from the parental zygote to progeny spores by encoding a poison and an antidote from the same locus; the poison is trans-acting and forms toxic aggregates in all spores within an ascus, wherease the antidote is spore-specific and targets aggregates for degradation by the vacuole. Meiotic drive by wtf systems therefore lead to poisoning of all progeny that do not inherit the dual poison/antidote allele, or express a compatible antidote. The chain is Meiotic drive suppressor wtf18 from Schizosaccharomyces pombe (strain 972 / ATCC 24843) (Fission yeast).